We begin with the raw amino-acid sequence, 496 residues long: Anaerobic nitric oxide reductase flavorubredoxin (496 aa).

The interval 30–210 (TKGTSYNSYL…PFSALVTAKI (181 aa)) is zinc metallo-hydrolase. The Fe cation site is built by H79, E81, D83, H147, D166, and H227. The Flavodoxin-like domain occupies 254–393 (ITIFYDSMSN…LCREHGQFIA (140 aa)). FMN-binding positions include 260–264 (SMSNN) and 342–369 (AFGS…ETAV). The Rubredoxin-like domain occupies 444–495 (KQCMLCSVCNWVYDPEIGEPNQGVEPNTPWSSVPNDFLCPECHLGKDVFVEI). The Fe cation site is built by C449, C452, C482, and C485.

The protein in the N-terminal section; belongs to the zinc metallo-hydrolase group 3 family. In terms of assembly, homotetramer. The cofactor is Fe cation. Requires FMN as cofactor.

The protein localises to the cytoplasm. It functions in the pathway nitrogen metabolism; nitric oxide reduction. Anaerobic nitric oxide reductase; uses NADH to detoxify nitric oxide (NO), protecting several 4Fe-4S NO-sensitive enzymes. Has at least 2 reductase partners, only one of which (NorW, flavorubredoxin reductase) has been identified. NO probably binds to the di-iron center; electrons enter from the NorW at rubredoxin and are transferred sequentially to the FMN center and the di-iron center. Also able to function as an aerobic oxygen reductase. The sequence is that of Anaerobic nitric oxide reductase flavorubredoxin from Aliivibrio fischeri (strain ATCC 700601 / ES114) (Vibrio fischeri).